The primary structure comprises 391 residues: 3-ketoacyl-CoA thiolase (391 aa).

Cys-95 functions as the Acyl-thioester intermediate in the catalytic mechanism. Catalysis depends on proton acceptor residues His-347 and Cys-377.

This sequence belongs to the thiolase-like superfamily. Thiolase family. As to quaternary structure, heterotetramer of two alpha chains (FadB) and two beta chains (FadA).

Its subcellular location is the cytoplasm. It carries out the reaction an acyl-CoA + acetyl-CoA = a 3-oxoacyl-CoA + CoA. Its pathway is lipid metabolism; fatty acid beta-oxidation. Functionally, catalyzes the final step of fatty acid oxidation in which acetyl-CoA is released and the CoA ester of a fatty acid two carbons shorter is formed. The protein is 3-ketoacyl-CoA thiolase of Pseudomonas aeruginosa (strain ATCC 15692 / DSM 22644 / CIP 104116 / JCM 14847 / LMG 12228 / 1C / PRS 101 / PAO1).